The following is a 318-amino-acid chain: MSVVVYAPASIGNVSVGFDVLGAAVSPIDGSLLGDRVLVESGSDAFTLATSGRFVDKLPENPQDNIVYDCWKVFARELETKNVTLKPIHMVLEKNMPIGSGLGSSACSIVAALDALNQFHDKPLTEMELLALMGEMEGQISGGIHYDNVAPCYLGGLQLMVEELGIISQEVPCFDEWYWVMAYPGIKVSTAEAREILPSQYRRQDVIAHGRNLAGFIHACYSKQPELAAKMIKDVVAEPYRERLLPNFAQARAYAASAGALTTGISGSGPTLFSICKDKDIAERVSRWLQDNYVQNDEGFVHVCRLDKQGSQVTGSKL.

97–107 (PIGSGLGSSAC) serves as a coordination point for ATP.

Belongs to the GHMP kinase family. Homoserine kinase subfamily.

It is found in the cytoplasm. It catalyses the reaction L-homoserine + ATP = O-phospho-L-homoserine + ADP + H(+). It participates in amino-acid biosynthesis; L-threonine biosynthesis; L-threonine from L-aspartate: step 4/5. In terms of biological role, catalyzes the ATP-dependent phosphorylation of L-homoserine to L-homoserine phosphate. The chain is Homoserine kinase from Aliivibrio salmonicida (strain LFI1238) (Vibrio salmonicida (strain LFI1238)).